The following is a 547-amino-acid chain: KsdD-like steroid dehydrogenase MSMEG_5835 (547 aa).

Residue 5-36 participates in FAD binding; sequence DVIVVGAGLAGLVAACELVERGHSVIIVDQEN.

This sequence belongs to the FAD-dependent oxidoreductase 2 family. Requires FAD as cofactor.

It participates in lipid metabolism; steroid biosynthesis. Functionally, able to catalyze the elimination of the C-1 and C-2 hydrogen atoms of the A-ring from the polycyclic ring structure of 3-ketosteroids, but the ketosteroid dehydrogenase activity is low compared to KsdD in the cholesterol degradation process. The low activity could be due to different substrate specificity. This is KsdD-like steroid dehydrogenase MSMEG_5835 from Mycolicibacterium smegmatis (strain ATCC 700084 / mc(2)155) (Mycobacterium smegmatis).